The chain runs to 442 residues: Tubulin beta chain (442 aa).

8 residues coordinate GTP: Gln-11, Glu-69, Ser-138, Gly-142, Thr-143, Gly-144, Asn-204, and Asn-226. Glu-69 contributes to the Mg(2+) binding site.

Belongs to the tubulin family. In terms of assembly, dimer of alpha and beta chains. A typical microtubule is a hollow water-filled tube with an outer diameter of 25 nm and an inner diameter of 15 nM. Alpha-beta heterodimers associate head-to-tail to form protofilaments running lengthwise along the microtubule wall with the beta-tubulin subunit facing the microtubule plus end conferring a structural polarity. Microtubules usually have 13 protofilaments but different protofilament numbers can be found in some organisms and specialized cells. Mg(2+) serves as cofactor.

The protein resides in the cytoplasm. Its subcellular location is the cytoskeleton. Tubulin is the major constituent of microtubules, a cylinder consisting of laterally associated linear protofilaments composed of alpha- and beta-tubulin heterodimers. Microtubules grow by the addition of GTP-tubulin dimers to the microtubule end, where a stabilizing cap forms. Below the cap, tubulin dimers are in GDP-bound state, owing to GTPase activity of alpha-tubulin. This is Tubulin beta chain (bPT2) from Paramecium tetraurelia.